Reading from the N-terminus, the 549-residue chain is Glucose-6-phosphate isomerase (549 aa).

Lysine 80, lysine 228, and lysine 234 each carry N6-acetyllysine. Glutamate 355 acts as the Proton donor in catalysis. Active-site residues include histidine 386 and lysine 514.

It belongs to the GPI family.

The protein resides in the cytoplasm. The catalysed reaction is alpha-D-glucose 6-phosphate = beta-D-fructose 6-phosphate. The protein operates within carbohydrate biosynthesis; gluconeogenesis. Its pathway is carbohydrate degradation; glycolysis; D-glyceraldehyde 3-phosphate and glycerone phosphate from D-glucose: step 2/4. In terms of biological role, catalyzes the reversible isomerization of glucose-6-phosphate to fructose-6-phosphate. This chain is Glucose-6-phosphate isomerase, found in Escherichia coli (strain SE11).